The following is a 168-amino-acid chain: Large ribosomal subunit protein bL17 (168 aa).

The tract at residues 124–168 (QATGEAEAATKRAAKDAEGSAEVSEAKVDTTKADDEAAAEESKDA) is disordered. Residues 131–168 (AATKRAAKDAEGSAEVSEAKVDTTKADDEAAAEESKDA) are compositionally biased toward basic and acidic residues.

It belongs to the bacterial ribosomal protein bL17 family. As to quaternary structure, part of the 50S ribosomal subunit. Contacts protein L32.

This Streptomyces coelicolor (strain ATCC BAA-471 / A3(2) / M145) protein is Large ribosomal subunit protein bL17.